An 87-amino-acid polypeptide reads, in one-letter code: Small ribosomal subunit protein uS15 (87 aa).

The protein belongs to the universal ribosomal protein uS15 family. Part of the 30S ribosomal subunit. Forms a bridge to the 50S subunit in the 70S ribosome, contacting the 23S rRNA.

Its function is as follows. One of the primary rRNA binding proteins, it binds directly to 16S rRNA where it helps nucleate assembly of the platform of the 30S subunit by binding and bridging several RNA helices of the 16S rRNA. Forms an intersubunit bridge (bridge B4) with the 23S rRNA of the 50S subunit in the ribosome. This chain is Small ribosomal subunit protein uS15, found in Cutibacterium acnes (strain DSM 16379 / KPA171202) (Propionibacterium acnes).